The chain runs to 252 residues: Ribosomal RNA small subunit methyltransferase J (252 aa).

Residues 101-102 (RD), 117-118 (ER), 153-154 (SS), and D171 contribute to the S-adenosyl-L-methionine site.

The protein belongs to the methyltransferase superfamily. RsmJ family.

It localises to the cytoplasm. It carries out the reaction guanosine(1516) in 16S rRNA + S-adenosyl-L-methionine = N(2)-methylguanosine(1516) in 16S rRNA + S-adenosyl-L-homocysteine + H(+). Its function is as follows. Specifically methylates the guanosine in position 1516 of 16S rRNA. This chain is Ribosomal RNA small subunit methyltransferase J, found in Salmonella typhimurium (strain LT2 / SGSC1412 / ATCC 700720).